Consider the following 503-residue polypeptide: AMP phosphorylase (503 aa).

AMP-binding positions include G168, 194–199, and T203; that span reads SRAITS. D256 (proton donor) is an active-site residue. AMP contacts are provided by S264 and K288.

This sequence belongs to the thymidine/pyrimidine-nucleoside phosphorylase family. Type 2 subfamily.

It carries out the reaction AMP + phosphate = alpha-D-ribose 1,5-bisphosphate + adenine. It catalyses the reaction CMP + phosphate = cytosine + alpha-D-ribose 1,5-bisphosphate. The catalysed reaction is UMP + phosphate = alpha-D-ribose 1,5-bisphosphate + uracil. Catalyzes the conversion of AMP and phosphate to adenine and ribose 1,5-bisphosphate (R15P). Exhibits phosphorylase activity toward CMP and UMP in addition to AMP. Functions in an archaeal AMP degradation pathway, together with R15P isomerase and RubisCO. The protein is AMP phosphorylase of Methanocaldococcus jannaschii (strain ATCC 43067 / DSM 2661 / JAL-1 / JCM 10045 / NBRC 100440) (Methanococcus jannaschii).